Reading from the N-terminus, the 327-residue chain is Ribosomal RNA large subunit methyltransferase F (327 aa).

Residues 1–24 (MPRKTSSQPRPAEPKAVLHPRNRH) form a disordered region.

This sequence belongs to the methyltransferase superfamily. METTL16/RlmF family.

It is found in the cytoplasm. It carries out the reaction adenosine(1618) in 23S rRNA + S-adenosyl-L-methionine = N(6)-methyladenosine(1618) in 23S rRNA + S-adenosyl-L-homocysteine + H(+). Its function is as follows. Specifically methylates the adenine in position 1618 of 23S rRNA. This Stutzerimonas stutzeri (strain A1501) (Pseudomonas stutzeri) protein is Ribosomal RNA large subunit methyltransferase F.